Consider the following 386-residue polypeptide: Succinate--CoA ligase [ADP-forming] subunit beta (386 aa).

Residues 9–244 (KELLRKYGVV…FDEEDADEIE (236 aa)) form the ATP-grasp domain. ATP is bound by residues lysine 46, 53–55 (GRG), glutamate 99, alanine 102, and glutamate 107. The Mg(2+) site is built by asparagine 199 and aspartate 213. Residues asparagine 264 and 321-323 (GIM) each bind substrate.

The protein belongs to the succinate/malate CoA ligase beta subunit family. In terms of assembly, heterotetramer of two alpha and two beta subunits. Requires Mg(2+) as cofactor.

It catalyses the reaction succinate + ATP + CoA = succinyl-CoA + ADP + phosphate. It carries out the reaction GTP + succinate + CoA = succinyl-CoA + GDP + phosphate. It participates in carbohydrate metabolism; tricarboxylic acid cycle; succinate from succinyl-CoA (ligase route): step 1/1. Succinyl-CoA synthetase functions in the citric acid cycle (TCA), coupling the hydrolysis of succinyl-CoA to the synthesis of either ATP or GTP and thus represents the only step of substrate-level phosphorylation in the TCA. The beta subunit provides nucleotide specificity of the enzyme and binds the substrate succinate, while the binding sites for coenzyme A and phosphate are found in the alpha subunit. In Aromatoleum aromaticum (strain DSM 19018 / LMG 30748 / EbN1) (Azoarcus sp. (strain EbN1)), this protein is Succinate--CoA ligase [ADP-forming] subunit beta.